Consider the following 385-residue polypeptide: uncharacterized protein (385 aa).

This sequence belongs to the phage portal family. HK97 subfamily.

This is an uncharacterized protein from Rickettsia bellii (strain RML369-C).